Reading from the N-terminus, the 188-residue chain is Elongation factor P (188 aa).

This sequence belongs to the elongation factor P family.

The protein localises to the cytoplasm. It functions in the pathway protein biosynthesis; polypeptide chain elongation. Involved in peptide bond synthesis. Stimulates efficient translation and peptide-bond synthesis on native or reconstituted 70S ribosomes in vitro. Probably functions indirectly by altering the affinity of the ribosome for aminoacyl-tRNA, thus increasing their reactivity as acceptors for peptidyl transferase. The chain is Elongation factor P from Anaplasma marginale (strain St. Maries).